We begin with the raw amino-acid sequence, 891 residues long: Alanine--tRNA ligase (891 aa).

Residues His564, His568, Cys678, and His682 each coordinate Zn(2+).

It belongs to the class-II aminoacyl-tRNA synthetase family. Requires Zn(2+) as cofactor.

It localises to the cytoplasm. The enzyme catalyses tRNA(Ala) + L-alanine + ATP = L-alanyl-tRNA(Ala) + AMP + diphosphate. In terms of biological role, catalyzes the attachment of alanine to tRNA(Ala) in a two-step reaction: alanine is first activated by ATP to form Ala-AMP and then transferred to the acceptor end of tRNA(Ala). Also edits incorrectly charged Ser-tRNA(Ala) and Gly-tRNA(Ala) via its editing domain. The sequence is that of Alanine--tRNA ligase from Nitrobacter winogradskyi (strain ATCC 25391 / DSM 10237 / CIP 104748 / NCIMB 11846 / Nb-255).